The chain runs to 125 residues: Large ribosomal subunit protein bL19 (125 aa).

It belongs to the bacterial ribosomal protein bL19 family.

This protein is located at the 30S-50S ribosomal subunit interface and may play a role in the structure and function of the aminoacyl-tRNA binding site. The polypeptide is Large ribosomal subunit protein bL19 (Ehrlichia canis (strain Jake)).